Here is a 232-residue protein sequence, read N- to C-terminus: Lipoprotein-releasing system ATP-binding protein LolD 1 (232 aa).

The ABC transporter domain occupies 11 to 231; that stretch reads VYLHDVKRQY…SIQDGLVVEL (221 aa). 47 to 54 lines the ATP pocket; the sequence is APSGAGKS.

Belongs to the ABC transporter superfamily. Lipoprotein translocase (TC 3.A.1.125) family. As to quaternary structure, the complex is composed of two ATP-binding proteins (LolD) and two transmembrane proteins (LolC and LolE).

The protein localises to the cell inner membrane. Part of the ABC transporter complex LolCDE involved in the translocation of mature outer membrane-directed lipoproteins, from the inner membrane to the periplasmic chaperone, LolA. Responsible for the formation of the LolA-lipoprotein complex in an ATP-dependent manner. The sequence is that of Lipoprotein-releasing system ATP-binding protein LolD 1 from Rhodopseudomonas palustris (strain BisB18).